The primary structure comprises 182 residues: Dual-action ribosomal maturation protein DarP (182 aa).

The protein belongs to the DarP family.

It localises to the cytoplasm. Member of a network of 50S ribosomal subunit biogenesis factors which assembles along the 30S-50S interface, preventing incorrect 23S rRNA structures from forming. Promotes peptidyl transferase center (PTC) maturation. In Serratia proteamaculans (strain 568), this protein is Dual-action ribosomal maturation protein DarP.